Consider the following 152-residue polypeptide: MTKERTFIAIKPDGVQRGYVAEIIGRFEKKGFKLVGLKQLIPSKDLAQNHYGVHRERPFFGDLVDFISSGPVVAMVWEGEGVILSARKLIGATKPLEAEPGTIRGDLAIDIGRNIIHGSDGEDTAKFEIDLWFNEEELCEWETSDAKWRSEN.

ATP is bound by residues lysine 11, phenylalanine 59, arginine 87, threonine 93, arginine 104, and asparagine 114. The active-site Pros-phosphohistidine intermediate is the histidine 117.

This sequence belongs to the NDK family. As to quaternary structure, homotetramer. Mg(2+) serves as cofactor.

It localises to the cytoplasm. The catalysed reaction is a 2'-deoxyribonucleoside 5'-diphosphate + ATP = a 2'-deoxyribonucleoside 5'-triphosphate + ADP. The enzyme catalyses a ribonucleoside 5'-diphosphate + ATP = a ribonucleoside 5'-triphosphate + ADP. Major role in the synthesis of nucleoside triphosphates other than ATP. The ATP gamma phosphate is transferred to the NDP beta phosphate via a ping-pong mechanism, using a phosphorylated active-site intermediate. In Prochlorococcus marinus (strain MIT 9215), this protein is Nucleoside diphosphate kinase.